We begin with the raw amino-acid sequence, 158 residues long: MNQCDYLLFLKQLPMFNEVPLSIVETLLKNGTFIRGSCDQSPSFLHSQSVYIVLKGSVRFMDTRLPEGSKTVALWEKGDVFPIDEKGGLYLSPFISVNATSDILILNIPYYIFKKMMSYHPQLQMNFLAMLQQNVFCSYQLFLRYLHTSQDENAEPGS.

Its function is as follows. Activates, in anaerobic conditions, the transcription of the fermentative operons lctEP and alsDS, of the hmp gene encoding a flavohemoglobin-like protein, the nitrite reductase operon nasDE and the heme biosynthesis genes hemN and hemZ. The protein is Probable transcription regulator ArfM (arfM) of Bacillus subtilis (strain 168).